A 157-amino-acid polypeptide reads, in one-letter code: Transcription elongation factor GreA (157 aa).

This sequence belongs to the GreA/GreB family.

Functionally, necessary for efficient RNA polymerase transcription elongation past template-encoded arresting sites. The arresting sites in DNA have the property of trapping a certain fraction of elongating RNA polymerases that pass through, resulting in locked ternary complexes. Cleavage of the nascent transcript by cleavage factors such as GreA or GreB allows the resumption of elongation from the new 3'terminus. GreA releases sequences of 2 to 3 nucleotides. The sequence is that of Transcription elongation factor GreA from Bartonella henselae (strain ATCC 49882 / DSM 28221 / CCUG 30454 / Houston 1) (Rochalimaea henselae).